The following is an 882-amino-acid chain: Translation initiation factor IF-2 (882 aa).

Composition is skewed to polar residues over residues 38–56 (NDSN…AEYS), 97–124 (GGYS…YSQN), and 140–192 (GGYS…NRDS). Disordered stretches follow at residues 38–192 (NDSN…NRDS) and 236–274 (STPA…AETE). The span at 243 to 259 (ENSKELNRKLGEKKKQQ) shows a compositional bias: basic and acidic residues. Residues 380–553 (EKPPVITIMG…DMMLLKANPS (174 aa)) form the tr-type G domain. Positions 389-396 (GHVDHGKT) are G1. A GTP-binding site is contributed by 389 to 396 (GHVDHGKT). Positions 414 to 418 (GITQH) are G2. The G3 stretch occupies residues 435-438 (DTPG). GTP-binding positions include 435–439 (DTPGH) and 489–492 (NKID). Residues 489 to 492 (NKID) form a G4 region. Positions 525–527 (SAL) are G5.

Belongs to the TRAFAC class translation factor GTPase superfamily. Classic translation factor GTPase family. IF-2 subfamily.

The protein resides in the cytoplasm. In terms of biological role, one of the essential components for the initiation of protein synthesis. Protects formylmethionyl-tRNA from spontaneous hydrolysis and promotes its binding to the 30S ribosomal subunits. Also involved in the hydrolysis of GTP during the formation of the 70S ribosomal complex. This is Translation initiation factor IF-2 (infB) from Borreliella burgdorferi (strain ATCC 35210 / DSM 4680 / CIP 102532 / B31) (Borrelia burgdorferi).